The sequence spans 132 residues: CDGSH iron-sulfur domain-containing protein 2 homolog (132 aa).

Over 1–35 (MEPISHLVKSSLPNYLSSLPVPDSLGGWFKLSFKD) the chain is Lumenal. Residues 36 to 58 (WLALIPPTAVLAGLGYTAYLAFC) traverse the membrane as a helical segment. The Cytoplasmic portion of the chain corresponds to 59–132 (PAAQCSAKSA…VGPVVVSKKK (74 aa)). [2Fe-2S] cluster is bound by residues cysteine 97, cysteine 99, cysteine 108, and histidine 112.

Belongs to the CISD protein family. CISD2 subfamily. [2Fe-2S] cluster is required as a cofactor.

It localises to the endoplasmic reticulum membrane. The polypeptide is CDGSH iron-sulfur domain-containing protein 2 homolog (Drosophila grimshawi (Hawaiian fruit fly)).